A 1218-amino-acid chain; its full sequence is NACHT, LRR and PYD domains-containing protein 1a allele 4 (1218 aa).

A compositionally biased stretch (polar residues) spans 1-29 (MGESQSKQESNTRVAQHGSQQDVDPTFQT). Disordered regions lie at residues 1 to 44 (MGES…QVEQ) and 71 to 91 (EMDH…DRSE). Residues 77-87 (RRHSHQSKKKL) show a composition bias toward basic residues. The region spanning 175-484 (QLVIIEGAAG…EFFAAMSYIL (310 aa)) is the NACHT domain. Residue 181 to 188 (GAAGIGKS) participates in ATP binding. LRR repeat units lie at residues 343 to 364 (KERN…LTLC), 673 to 693 (NLEE…RSLC), and 730 to 750 (RLAE…RQLC). Polar residues predominate over residues 799-815 (TMPTENTDGEESLTSSK). Residues 799 to 842 (TMPTENTDGEESLTSSKQQQQQSGDKHMEPLGTDDDFWGPSGPV) form a disordered region. Residues 835–968 (FWGPSGPVST…HFAVLENPSF (134 aa)) are ZU5. Residues 835 to 1118 (FWGPSGPVST…LRPALPRMAS (284 aa)) enclose the FIIND domain. The interval 969–1118 (SPMGVLLRMI…LRPALPRMAS (150 aa)) is UPA. Positions 1122–1211 (DAPALLHFVD…HLIMDLLEKS (90 aa)) constitute a CARD domain.

This sequence belongs to the NLRP family. In terms of assembly, interacts (via LRR repeats) with BCL2 and BCL2L1 (via the loop between motifs BH4 and BH3). Interacts with NOD2; this interaction is enhanced in the presence of muramyl dipeptide (MDP) and increases IL1B release. Interacts with EIF2AK2/PKR; this interaction requires EIF2AK2 activity, is accompanied by EIF2AK2 autophosphorylation and promotes inflammasome assembly in response to danger-associated signals. Interacts with MEFV; this interaction targets Nlrp1a to degradation by autophagy, hence preventing excessive IL1B- and IL18-mediated inflammation. Interacts with DPP9; leading to inhibit activation of the inflammasome. DPP9 acts via formation of a ternary complex, composed of a DPP9 homodimer, one full-length NLRP1 protein, and one cleaved C-terminus of Nlrp1a (NACHT, LRR and PYD domains-containing protein 1a, C-terminus). Interacts with DPP8; leading to inhibit activation of the inflammasome, probably via formation of a ternary complex with DPP8. Interacts with the C-terminal part of Nlrp1a (NACHT, LRR and PYD domains-containing protein 1a, C-terminus) in absence of pathogens and other damage-associated signals. As to quaternary structure, interacts with the N-terminal part of Nlrp1a (NACHT, LRR and PYD domains-containing protein 1a, N-terminus) in absence of pathogens and other damage-associated signals. Homomultimer; forms the Nlrp1a inflammasome polymeric complex, a filament composed of homopolymers of this form in response to pathogens and other damage-associated signals. The Nlrp1a inflammasome polymeric complex directly recruits pro-caspase-1 (proCASP1) independently of PYCARD/ASC. Interacts (via CARD domain) with CASP1 (via CARD domain); leading to CASP1 activation. In terms of processing, autocatalytically cleaved. Autocatalytic cleavage in FIIND region occurs constitutively, prior to activation signals, and is required for inflammasome activity (IL1B release), possibly by facilitating CASP1 binding. Both N- and C-terminal parts remain associated non-covalently. Ubiquitinated in response to pathogen-associated signals, leading to its degradation by the proteasome and subsequent release of the cleaved C-terminal part of the protein (NACHT, LRR and PYD domains-containing protein 1a, C-terminus), which polymerizes and forms the Nlrp1a inflammasome.

The protein resides in the cytoplasm. Its subcellular location is the cytosol. It is found in the nucleus. It localises to the inflammasome. Activated by pathogens and other damage-associated signals: activation promotes ubiquitination and degradation of the N-terminal part, releasing the cleaved C-terminal part of the protein (NACHT, LRR and PYD domains-containing protein 1a, C-terminus), which polymerizes and forms the Nlrp1a inflammasome. Nlrp1a inflammasome is inhibited by DPP8 and DPP9, which sequester the C-terminal fragment of Nlrp1a (NACHT, LRR and PYD domains-containing protein 1a, C-terminus) in a ternary complex, thereby preventing Nlrp1a oligomerization and activation. Nlrp1a inflammasome is strongly activated by Val-boroPro (Talabostat, PT-100), an inhibitor of dipeptidyl peptidases DPP8 and DPP9. Val-boroPro relieves inhibition of DPP8 and/or DPP9 by promoting disruption of the ternary complex, releasing its C-terminal part from autoinhibition. Not activated by cleavage by B.anthracis lethal toxin (LT) endopeptidase. Its function is as follows. Acts as the sensor component of the Nlrp1a inflammasome, which mediates inflammasome activation in response to various pathogen-associated signals, leading to subsequent pyroptosis. Inflammasomes are supramolecular complexes that assemble in the cytosol in response to pathogens and other damage-associated signals and play critical roles in innate immunity and inflammation. Acts as a recognition receptor (PRR): recognizes specific pathogens and other damage-associated signals, such as Val-boroPro inhibitor, and mediates the formation of the inflammasome polymeric complex. In response to pathogen-associated signals, the N-terminal part of Nlrp1a is degraded by the proteasome, releasing the cleaved C-terminal part of the protein (NACHT, LRR and PYD domains-containing protein 1a, C-terminus), which polymerizes to initiate the formation of the inflammasome complex: the inflammasome directly recruits pro-caspase-1 (proCASP1) independently of PYCARD/ASC and promotes caspase-1 (CASP1) activation, which subsequently cleaves and activates inflammatory cytokines IL1B and IL18 and gasdermin-D (GSDMD), leading to pyroptosis. In the absence of GSDMD expression, the Nlrp1a inflammasome is able to recruit and activate CASP8, leading to activation of gasdermin-E (GSDME). Constitutes the precursor of the Nlrp1a inflammasome, which mediates autoproteolytic processing within the FIIND domain to generate the N-terminal and C-terminal parts, which are associated non-covalently in absence of pathogens and other damage-associated signals. Functionally, regulatory part that prevents formation of the Nlrp1a inflammasome: in absence of pathogens and other damage-associated signals, interacts with the C-terminal part of Nlrp1a (NACHT, LRR and PYD domains-containing protein 1a, C-terminus), preventing activation of the Nlrp1a inflammasome. In response to pathogen-associated signals, this part is ubiquitinated by the N-end rule pathway and degraded by the proteasome, releasing the cleaved C-terminal part of the protein, which polymerizes and forms the Nlrp1a inflammasome. In terms of biological role, constitutes the active part of the Nlrp1a inflammasome. In absence of pathogens and other damage-associated signals, interacts with the N-terminal part of Nlrp1a (NACHT, LRR and PYD domains-containing protein 1a, N-terminus), preventing activation of the Nlrp1a inflammasome. In response to pathogen-associated signals, the N-terminal part of Nlrp1a is degraded by the proteasome, releasing this form, which polymerizes to form the Nlrp1a inflammasome complex: the Nlrp1a inflammasome complex then directly recruits pro-caspase-1 (proCASP1) and promotes caspase-1 (CASP1) activation, leading to gasdermin-D (GSDMD) cleavage and subsequent pyroptosis. This chain is NACHT, LRR and PYD domains-containing protein 1a allele 4, found in Rattus norvegicus (Rat).